We begin with the raw amino-acid sequence, 1051 residues long: Integrin alpha-3 (1051 aa).

The signal sequence occupies residues 1–32 (MGPGPRCAPGDPGWMLGALALMVAASGRFAFA). Over 33–991 (FNLDTRFLVV…LVEELPAEIE (959 aa)) the chain is Extracellular. 7 FG-GAP repeats span residues 38 to 103 (RFLV…KDDC), 110 to 171 (EKSD…DLQL), 185 to 235 (CNSN…WDLS), 236 to 292 (EYSY…GGDL), 293 to 354 (KRKQ…TSFP), 356 to 411 (QPSL…GLLR), and 415 to 477 (QIVH…VARP). An N-linked (GlcNAc...) asparagine glycan is attached at N86. Cystine bridges form between C94–C103, C140–C162, and C185–C197. Positions 315, 317, 319, 323, 378, 380, 382, 386, 439, 441, 443, 445, and 447 each coordinate Ca(2+). Cystine bridges form between C485–C490 and C496–C550. Residues N500, N511, N573, and N605 are each glycosylated (N-linked (GlcNAc...) asparagine). C615 and C621 are disulfide-bonded. N-linked (GlcNAc...) asparagine glycans are attached at residues N656, N697, and N841. A disulfide bridge links C694 with C702. Disulfide bonds link C846–C904 and C911–C916. Residues 860–888 (LSDPGDKPHSPQRRRRQLDPGGDQGSPPV) form a disordered region. Residues N923, N926, N935, and N969 are each glycosylated (N-linked (GlcNAc...) asparagine). A helical membrane pass occupies residues 992-1019 (LWLVLVAVSAGLLLLGLIIILLWKCGFF). Positions 1017 to 1021 (GFFKR) match the GFFKR motif motif. Topologically, residues 1020–1051 (KRARTRALYEAKRQKAEMKSQPSETERLTDDY) are cytoplasmic.

This sequence belongs to the integrin alpha chain family. In terms of assembly, heterodimer of an alpha and a beta subunit. The alpha subunit is composed of a heavy and a light chain linked by a disulfide bond. Alpha-3 associates with beta-1. Interacts with HPS5. Interacts with FAP (seprase); the interaction occurs at the cell surface of invadopodia membrane in a collagen-dependent manner. In terms of processing, isoform 1, but not isoform 2, is phosphorylated on serine residues.

It is found in the cell membrane. It localises to the cell projection. The protein resides in the invadopodium membrane. Its subcellular location is the filopodium membrane. Its function is as follows. Integrin alpha-3/beta-1 is a receptor for fibronectin, laminin, collagen, epiligrin, thrombospondin and CSPG4. Integrin alpha-3/beta-1 provides a docking site for FAP (seprase) at invadopodia plasma membranes in a collagen-dependent manner and hence may participate in the adhesion, formation of invadopodia and matrix degradation processes, promoting cell invasion. Alpha-3/beta-1 may mediate with LGALS3 the stimulation by CSPG4 of endothelial cells migration. The polypeptide is Integrin alpha-3 (ITGA3) (Cricetulus griseus (Chinese hamster)).